Consider the following 298-residue polypeptide: Glycine--tRNA ligase alpha subunit (298 aa).

Belongs to the class-II aminoacyl-tRNA synthetase family. As to quaternary structure, tetramer of two alpha and two beta subunits.

It localises to the cytoplasm. The catalysed reaction is tRNA(Gly) + glycine + ATP = glycyl-tRNA(Gly) + AMP + diphosphate. This Helicobacter hepaticus (strain ATCC 51449 / 3B1) protein is Glycine--tRNA ligase alpha subunit.